Here is a 689-residue protein sequence, read N- to C-terminus: Putative ATP-dependent helicase IRC3 (689 aa).

The 166-residue stretch at 46–211 folds into the Helicase ATP-binding domain; the sequence is NSIRQGTKRI…SMVMDKIVYH (166 aa). 59–66 contributes to the ATP binding site; the sequence is LATGGGKT. Residues 158–161 carry the DEAH box motif; the sequence is DEAH. The region spanning 265-438 is the Helicase C-terminal domain; it reads ILKTYLHKKQ…KIDERLRALF (174 aa).

Belongs to the helicase family. IRC3 subfamily.

It localises to the mitochondrion. The sequence is that of Putative ATP-dependent helicase IRC3 (IRC3) from Saccharomyces cerevisiae (strain ATCC 204508 / S288c) (Baker's yeast).